Reading from the N-terminus, the 202-residue chain is NADH:(hydroxy)cinnamate reductase subunit CrdA (202 aa).

This sequence belongs to the NADH-dependent flavin reductase family. As to quaternary structure, NADH:(hydroxy)cinnamate reductase Crd is a heterodimer composed of CrdA and CrdB subunits, encoded by adjacent genes. It depends on FMN as a cofactor.

Its function is as follows. Component of the NADH:(hydroxy)cinnamate reductase. CrdA is probably reduced by NADH and then transfers the electrons to the catalytic center of CrdB. Is likely involved in protecting V.ruber from (hydroxy)cinnamate poisoning. The protein is NADH:(hydroxy)cinnamate reductase subunit CrdA of Vibrio ruber (strain DSM 16370 / JCM 11486 / BCRC 17186 / CECT 7878 / LMG 23124 / VR1).